The following is a 250-amino-acid chain: DNA repair protein RecO (250 aa).

Belongs to the RecO family.

Its function is as follows. Involved in DNA repair and RecF pathway recombination. This Granulibacter bethesdensis (strain ATCC BAA-1260 / CGDNIH1) protein is DNA repair protein RecO.